Reading from the N-terminus, the 246-residue chain is Envelope glycoprotein gp95 (246 aa).

At 1–192 the chain is on the extracellular side; the sequence is IPSRPVGGPC…EWAVHLLKGL (192 aa). N-linked (GlcNAc...) asparagine; by host glycosylation is present at Asn-31. An intrachain disulfide couples Cys-50 to Cys-86. The segment at 58 to 78 is fusion peptide; it reads GPTARIFASILAPGVAAAQAL. Residues 75-125 are a coiled coil; it reads AQALKEIERLACWSVKQANLTTSLLGDLLDDVTSIRHAVLQNRAAIDFLLL. The N-linked (GlcNAc...) asparagine; by host glycan is linked to Asn-93. An immunosuppression region spans residues 114–130; the sequence is LQNRAAIDFLLLAHGHG. A disulfide bond links Cys-131 and Cys-138. N-linked (GlcNAc...) asparagine; by host glycosylation is present at Asn-141. Residues 143-173 are a coiled coil; the sequence is SDHSESIQKKFQLMKEHVNKIGVDSDPIGSW. A helical transmembrane segment spans residues 193–213; it reads LLGLVVILLLVVCLPCLLQIV. S-palmitoyl cysteine; by host attachment occurs at residues Cys-205 and Cys-208. Residues 214–246 are Cytoplasmic-facing; that stretch reads CGNIRKMINNSISYHTEYKKLQKAYGQPESRIV.

It belongs to the Alpharetroviruses envelope glycoprotein family. As to quaternary structure, heterodimer with the transmembrane protein. The mature envelope protein (Env) consists of a trimer of SU-TM heterodimers attached by a labile interchain disulfide bond. Heterodimer with the surface protein. The mature envelope protein (Env) consists of a trimer of SU-TM heterodimers attached by a labile interchain disulfide bond. In terms of processing, specific enzymatic cleavages in vivo yield mature proteins. Envelope glycoproteins are synthesized as an inactive precursor that is N-glycosylated and processed likely by host cell furin or by a furin-like protease in the Golgi to yield the mature SU and TM proteins. The cleavage site between SU and TM requires the minimal sequence [KR]-X-[KR]-R. Post-translationally, the transmembrane protein is palmitoylated. Palmitoylation is necessary for glycoprotein function and infectivity.

The protein localises to the virion membrane. It is found in the host cell membrane. The surface protein (SU) attaches the virus to the host cell by binding to its receptor. This interaction triggers the refolding of the transmembrane protein (TM) thereby unmasking its fusion peptide and the formation of a reactive thiolate to activate its fusogenic potential. Fusion occurs at the host cell plasma membrane. Its function is as follows. The transmembrane protein (TM) acts as a class I viral fusion protein. Under the current model, the protein has at least 3 conformational states: pre-fusion native state, pre-hairpin intermediate state, and post-fusion hairpin state. During viral and target cell membrane fusion, the coiled coil regions (heptad repeats) assume a trimer-of-hairpins structure, positioning the fusion peptide in close proximity to the C-terminal region of the ectodomain. The formation of this structure appears to drive apposition and subsequent fusion of viral and target cell membranes. Membranes fusion leads to delivery of the nucleocapsid into the cytoplasm. In Galliformes, this protein is Envelope glycoprotein gp95 (env).